The chain runs to 283 residues: 4-diphosphocytidyl-2-C-methyl-D-erythritol kinase (283 aa).

Lys-10 is a catalytic residue. 99 to 109 (PMGGGLGGGSS) is an ATP binding site. Asp-141 is a catalytic residue.

The protein belongs to the GHMP kinase family. IspE subfamily. Homodimer.

It carries out the reaction 4-CDP-2-C-methyl-D-erythritol + ATP = 4-CDP-2-C-methyl-D-erythritol 2-phosphate + ADP + H(+). It functions in the pathway isoprenoid biosynthesis; isopentenyl diphosphate biosynthesis via DXP pathway; isopentenyl diphosphate from 1-deoxy-D-xylulose 5-phosphate: step 3/6. Its function is as follows. Catalyzes the phosphorylation of the position 2 hydroxy group of 4-diphosphocytidyl-2C-methyl-D-erythritol. This Escherichia coli O127:H6 (strain E2348/69 / EPEC) protein is 4-diphosphocytidyl-2-C-methyl-D-erythritol kinase.